We begin with the raw amino-acid sequence, 204 residues long: Thymidine kinase (204 aa).

ATP-binding positions include 18 to 25 (GSMFSGKT) and 91 to 94 (DEGQ). The Proton acceptor role is filled by glutamate 92. Residues cysteine 148, cysteine 151, cysteine 180, and histidine 183 each contribute to the Zn(2+) site.

The protein belongs to the thymidine kinase family. Homotetramer.

The protein resides in the cytoplasm. It carries out the reaction thymidine + ATP = dTMP + ADP + H(+). The chain is Thymidine kinase from Bdellovibrio bacteriovorus (strain ATCC 15356 / DSM 50701 / NCIMB 9529 / HD100).